The chain runs to 937 residues: Isoleucine--tRNA ligase (937 aa).

The 'HIGH' region signature appears at 58–68 (PYANGNIHIGH). Glutamate 560 is a binding site for L-isoleucyl-5'-AMP. Positions 601-605 (KMSKS) match the 'KMSKS' region motif. Residue lysine 604 coordinates ATP. Positions 900, 903, 920, and 923 each coordinate Zn(2+).

The protein belongs to the class-I aminoacyl-tRNA synthetase family. IleS type 1 subfamily. Monomer. The cofactor is Zn(2+).

Its subcellular location is the cytoplasm. It carries out the reaction tRNA(Ile) + L-isoleucine + ATP = L-isoleucyl-tRNA(Ile) + AMP + diphosphate. In terms of biological role, catalyzes the attachment of isoleucine to tRNA(Ile). As IleRS can inadvertently accommodate and process structurally similar amino acids such as valine, to avoid such errors it has two additional distinct tRNA(Ile)-dependent editing activities. One activity is designated as 'pretransfer' editing and involves the hydrolysis of activated Val-AMP. The other activity is designated 'posttransfer' editing and involves deacylation of mischarged Val-tRNA(Ile). The polypeptide is Isoleucine--tRNA ligase (Thioalkalivibrio sulfidiphilus (strain HL-EbGR7)).